We begin with the raw amino-acid sequence, 287 residues long: Coatomer subunit epsilon-1 (287 aa).

The protein belongs to the COPE family. As to quaternary structure, oligomeric complex that consists of at least the alpha, beta, beta', gamma, delta, epsilon and zeta subunits.

The protein resides in the cytoplasm. It localises to the golgi apparatus membrane. The protein localises to the cytoplasmic vesicle. Its subcellular location is the COPI-coated vesicle membrane. Functionally, the coatomer is a cytosolic protein complex that binds to dilysine motifs and reversibly associates with Golgi non-clathrin-coated vesicles, which further mediate biosynthetic protein transport from the ER, via the Golgi up to the trans Golgi network. The coatomer complex is required for budding from Golgi membranes, and is essential for the retrograde Golgi-to-ER transport of dilysine-tagged proteins. This Oryza sativa subsp. japonica (Rice) protein is Coatomer subunit epsilon-1 (COPE1).